A 562-amino-acid chain; its full sequence is Arginine--tRNA ligase (562 aa).

The 'HIGH' region signature appears at 129–139 (ANPTGPLHVGH).

Belongs to the class-I aminoacyl-tRNA synthetase family. As to quaternary structure, monomer.

The protein localises to the cytoplasm. It catalyses the reaction tRNA(Arg) + L-arginine + ATP = L-arginyl-tRNA(Arg) + AMP + diphosphate. This is Arginine--tRNA ligase from Xanthomonas oryzae pv. oryzae (strain MAFF 311018).